The following is a 624-amino-acid chain: ATP-dependent zinc metalloprotease FtsH (624 aa).

Residues methionine 1–serine 7 are Cytoplasmic-facing. A helical membrane pass occupies residues leucine 8 to valine 28. Over glycine 29–asparagine 103 the chain is Periplasmic. The chain crosses the membrane as a helical span at residues alanine 104–phenylalanine 124. Over serine 125–alanine 624 the chain is Cytoplasmic. Residues alanine 159, glycine 199–threonine 203, and histidine 204 contribute to the ATP site. Histidine 418 is a binding site for Zn(2+). Glutamate 419 is a catalytic residue. 2 residues coordinate Zn(2+): histidine 422 and aspartate 493. The interval proline 595 to alanine 624 is disordered. Over residues glutamate 600 to proline 609 the composition is skewed to basic and acidic residues.

The protein in the central section; belongs to the AAA ATPase family. It in the C-terminal section; belongs to the peptidase M41 family. The isolated soluble domain (residues 126-624) forms a stable hexamer in which the AAA+ domains (residues 126-400) are alternatively open or closed. Requires Zn(2+) as cofactor.

It localises to the cell inner membrane. With respect to regulation, the proteolytic activity is dependent on ATP, both the ATPase and protease activities are inhibited by ADP. Its function is as follows. Acts as a processive, ATP-dependent zinc metallopeptidase for both cytoplasmic and membrane proteins. Plays a role in the quality control of integral membrane proteins. Functionally, degrades preferentially unfolded substrates in a processive, ATP-dependent manner, usually after hydrophobic residues. The chain is ATP-dependent zinc metalloprotease FtsH from Thermus thermophilus (strain ATCC 27634 / DSM 579 / HB8).